Reading from the N-terminus, the 271-residue chain is Glutamate racemase (271 aa).

Substrate-binding positions include 9–10 (DS) and 41–42 (YG). The active-site Proton donor/acceptor is the cysteine 72. 73 to 74 (NT) lines the substrate pocket. Cysteine 183 functions as the Proton donor/acceptor in the catalytic mechanism. 184-185 (TH) is a binding site for substrate.

It belongs to the aspartate/glutamate racemases family.

It carries out the reaction L-glutamate = D-glutamate. Its pathway is cell wall biogenesis; peptidoglycan biosynthesis. Provides the (R)-glutamate required for cell wall biosynthesis. The protein is Glutamate racemase of Exiguobacterium sibiricum (strain DSM 17290 / CCUG 55495 / CIP 109462 / JCM 13490 / 255-15).